A 693-amino-acid polypeptide reads, in one-letter code: Elongation factor G (693 aa).

One can recognise a tr-type G domain in the interval 8 to 283; the sequence is NRCRNIGIMA…AVVDYLPSPL (276 aa). Residues 17–24, 81–85, and 135–138 contribute to the GTP site; these read AHIDAGKT, DTPGH, and NKMD.

Belongs to the TRAFAC class translation factor GTPase superfamily. Classic translation factor GTPase family. EF-G/EF-2 subfamily.

The protein resides in the cytoplasm. Functionally, catalyzes the GTP-dependent ribosomal translocation step during translation elongation. During this step, the ribosome changes from the pre-translocational (PRE) to the post-translocational (POST) state as the newly formed A-site-bound peptidyl-tRNA and P-site-bound deacylated tRNA move to the P and E sites, respectively. Catalyzes the coordinated movement of the two tRNA molecules, the mRNA and conformational changes in the ribosome. This Acidobacterium capsulatum (strain ATCC 51196 / DSM 11244 / BCRC 80197 / JCM 7670 / NBRC 15755 / NCIMB 13165 / 161) protein is Elongation factor G.